A 142-amino-acid chain; its full sequence is 3-hydroxyacyl-[acyl-carrier-protein] dehydratase FabZ (142 aa).

Residue His-41 is part of the active site.

This sequence belongs to the thioester dehydratase family. FabZ subfamily.

The protein localises to the cytoplasm. It catalyses the reaction a (3R)-hydroxyacyl-[ACP] = a (2E)-enoyl-[ACP] + H2O. In terms of biological role, involved in unsaturated fatty acids biosynthesis. Catalyzes the dehydration of short chain beta-hydroxyacyl-ACPs and long chain saturated and unsaturated beta-hydroxyacyl-ACPs. This is 3-hydroxyacyl-[acyl-carrier-protein] dehydratase FabZ from Symbiobacterium thermophilum (strain DSM 24528 / JCM 14929 / IAM 14863 / T).